The following is a 301-amino-acid chain: uncharacterized protein (301 aa).

Disordered stretches follow at residues 167 to 186 (DVHL…PKER) and 225 to 244 (ASES…EGAS). The span at 170–181 (LNSTTPPHTAQV) shows a compositional bias: polar residues. Low complexity predominate over residues 226 to 237 (SESSLETSSVSS).

This is an uncharacterized protein from Mus musculus (Mouse).